A 281-amino-acid polypeptide reads, in one-letter code: MARSNLNVSGIEIANDRPFVLFGGMNVLESRELAFEVAEKYVDVCTRLGIPYVFKASFDKANRSSVNSFRGPGLEKGLQILADIKSKFGVPIISDVHEPGQAAPAAEVCDIIQLPAFLSRQTDLVVAMAKTGAVINIKKAQFLAPQEMKHIITKCEEAGNDQIILCERGTSFGYNNLVVDMLGFGIMKQMNVPVFFDVTHALQMPGGRADSAGGRRAQVTDLALAGMSQGLAGLFLEAHPDPDKARCDGPCALRLSQLEPFLERVKAVDDLVKSFKPIDTA.

The protein belongs to the KdsA family.

It is found in the cytoplasm. It catalyses the reaction D-arabinose 5-phosphate + phosphoenolpyruvate + H2O = 3-deoxy-alpha-D-manno-2-octulosonate-8-phosphate + phosphate. It functions in the pathway carbohydrate biosynthesis; 3-deoxy-D-manno-octulosonate biosynthesis; 3-deoxy-D-manno-octulosonate from D-ribulose 5-phosphate: step 2/3. Its pathway is bacterial outer membrane biogenesis; lipopolysaccharide biosynthesis. The sequence is that of 2-dehydro-3-deoxyphosphooctonate aldolase from Marinobacter nauticus (strain ATCC 700491 / DSM 11845 / VT8) (Marinobacter aquaeolei).